Consider the following 141-residue polypeptide: Putative pre-16S rRNA nuclease (141 aa).

This sequence belongs to the YqgF nuclease family.

Its subcellular location is the cytoplasm. Its function is as follows. Could be a nuclease involved in processing of the 5'-end of pre-16S rRNA. The polypeptide is Putative pre-16S rRNA nuclease (Vibrio parahaemolyticus serotype O3:K6 (strain RIMD 2210633)).